A 546-amino-acid chain; its full sequence is Cryptochrome DASH, chloroplastic/mitochondrial (546 aa).

The region spanning 4–151 (TRVVIWFRND…TMERHWGSTL (148 aa)) is the Photolyase/cryptochrome alpha/beta domain. A disordered region spans residues 497-546 (PRRDFTEMGSPPGPRRGGGGGGRGRGRPGGSTPNRGTKARVASVYDTVYG). A compositionally biased stretch (gly residues) spans 511 to 525 (RRGGGGGGRGRGRPG).

The protein belongs to the DNA photolyase class-1 family. FAD serves as cofactor. The cofactor is (6R)-5,10-methylene-5,6,7,8-tetrahydrofolate.

The protein resides in the plastid. It is found in the chloroplast. The protein localises to the mitochondrion. Functionally, may have a photoreceptor function. Binds ss- and ds-DNA in a sequence non-specific manner, lacks photolyase activity. This Ostreococcus tauri protein is Cryptochrome DASH, chloroplastic/mitochondrial.